A 314-amino-acid polypeptide reads, in one-letter code: MKIILANPRGFCAGVDRAISIVELALEIHGAPIYVRHEVVHNRFVVNGLRERGAVFVEELDEVPDGAIVIFSAHGVSQAVRQEAKRRNLKVFDATCPLVTKVHMQVARASRKGTKAILIGHEGHPEVQGTMGQYDNRDGGIFLVENVEDIAKLHLRDDDDLTFMTQTTLSIDDTADVIEALKQKYPNIQGPRKNDICYATTNRQQAVRDLAEQCDLVIVIGSKNSSNSNRLAELANRMGTPAKLLDDANDVDPAWLENVDIIGVTAGASAPEVLVQSVVSRLKELGVDTVEELTGCEENMFFEVPKELRINEAH.

Cys-12 contributes to the [4Fe-4S] cluster binding site. Residues His-41 and His-74 each coordinate (2E)-4-hydroxy-3-methylbut-2-enyl diphosphate. Positions 41 and 74 each coordinate dimethylallyl diphosphate. Residues His-41 and His-74 each coordinate isopentenyl diphosphate. [4Fe-4S] cluster is bound at residue Cys-96. His-124 provides a ligand contact to (2E)-4-hydroxy-3-methylbut-2-enyl diphosphate. Position 124 (His-124) interacts with dimethylallyl diphosphate. His-124 serves as a coordination point for isopentenyl diphosphate. Catalysis depends on Glu-126, which acts as the Proton donor. Residue Thr-167 participates in (2E)-4-hydroxy-3-methylbut-2-enyl diphosphate binding. Cys-197 is a binding site for [4Fe-4S] cluster. Residues Ser-225, Ser-226, Asn-227, and Ser-269 each contribute to the (2E)-4-hydroxy-3-methylbut-2-enyl diphosphate site. The dimethylallyl diphosphate site is built by Ser-225, Ser-226, Asn-227, and Ser-269. Isopentenyl diphosphate-binding residues include Ser-225, Ser-226, Asn-227, and Ser-269.

This sequence belongs to the IspH family. [4Fe-4S] cluster serves as cofactor.

It carries out the reaction isopentenyl diphosphate + 2 oxidized [2Fe-2S]-[ferredoxin] + H2O = (2E)-4-hydroxy-3-methylbut-2-enyl diphosphate + 2 reduced [2Fe-2S]-[ferredoxin] + 2 H(+). The catalysed reaction is dimethylallyl diphosphate + 2 oxidized [2Fe-2S]-[ferredoxin] + H2O = (2E)-4-hydroxy-3-methylbut-2-enyl diphosphate + 2 reduced [2Fe-2S]-[ferredoxin] + 2 H(+). It participates in isoprenoid biosynthesis; dimethylallyl diphosphate biosynthesis; dimethylallyl diphosphate from (2E)-4-hydroxy-3-methylbutenyl diphosphate: step 1/1. Its pathway is isoprenoid biosynthesis; isopentenyl diphosphate biosynthesis via DXP pathway; isopentenyl diphosphate from 1-deoxy-D-xylulose 5-phosphate: step 6/6. In terms of biological role, catalyzes the conversion of 1-hydroxy-2-methyl-2-(E)-butenyl 4-diphosphate (HMBPP) into a mixture of isopentenyl diphosphate (IPP) and dimethylallyl diphosphate (DMAPP). Acts in the terminal step of the DOXP/MEP pathway for isoprenoid precursor biosynthesis. In Actinobacillus succinogenes (strain ATCC 55618 / DSM 22257 / CCUG 43843 / 130Z), this protein is 4-hydroxy-3-methylbut-2-enyl diphosphate reductase.